The chain runs to 50 residues: uncharacterized protein (50 aa).

A helical membrane pass occupies residues 10–29 (LFFYYPFFIIFLYIYLVFFI).

The protein localises to the plastid. The protein resides in the chloroplast membrane. This is an uncharacterized protein from Marchantia polymorpha (Common liverwort).